The sequence spans 421 residues: Putative leucine-rich repeat protein R380 (421 aa).

7 LRR repeats span residues Tyr48–Pro69, Lys70–Pro85, Asn89–Lys110, Leu111–Pro129, Glu130–Pro150, Asn151–Ile172, and Glu173–Val191.

This chain is Putative leucine-rich repeat protein R380, found in Acanthamoeba polyphaga (Amoeba).